Here is a 373-residue protein sequence, read N- to C-terminus: Protodeoxyviolaceinate monooxygenase (373 aa).

2 to 20 (KILVIGAGPAGLVFASQLK) serves as a coordination point for FAD.

The cofactor is FAD.

The enzyme catalyses protodeoxyviolaceinate + NADH + O2 + H(+) = protoviolaceinate + NAD(+) + H2O. The catalysed reaction is protodeoxyviolaceinate + NADPH + O2 + H(+) = protoviolaceinate + NADP(+) + H2O. It participates in pigment biosynthesis; violacein biosynthesis. Its function is as follows. Catalyzes the oxygenation of the 6-position of protodeoxyviolaceinate to form proviolacein. The polypeptide is Protodeoxyviolaceinate monooxygenase (vioD) (Chromobacterium violaceum (strain ATCC 12472 / DSM 30191 / JCM 1249 / CCUG 213 / NBRC 12614 / NCIMB 9131 / NCTC 9757 / MK)).